The following is a 257-amino-acid chain: Major prion protein (257 aa).

Positions 1-24 (MVKSHIGGWILVLFVAAWSDIGLC) are cleaved as a signal peptide. Residues 25–234 (KKRPKPGGGW…EYEAYAQRGA (210 aa)) are interaction with GRB2, ERI3 and SYN1. A disordered region spans residues 28 to 113 (PKPGGGWNTG…NKPSKPKTNM (86 aa)). 5 consecutive repeat copies span residues 54 to 62 (PQGGGGWGQ), 63 to 70 (PHGGGWGQ), 71 to 78 (PHGGGWGQ), 79 to 86 (PHGGGWGQ), and 87 to 95 (PHGGGGWGQ). The segment at 54 to 95 (PQGGGGWGQPHGGGWGQPHGGGWGQPHGGGWGQPHGGGGWGQ) is 5 X 8 AA tandem repeats of P-H-G-G-G-W-G-Q. Residues 55-100 (QGGGGWGQPHGGGWGQPHGGGWGQPHGGGWGQPHGGGGWGQGGGSH) are compositionally biased toward gly residues. His64, Gly65, Gly66, His72, Gly73, Gly74, His80, Gly81, Gly82, His88, Gly90, and Gly91 together coordinate Cu(2+). Cysteines 183 and 218 form a disulfide. Asn185 and Asn201 each carry an N-linked (GlcNAc...) asparagine glycan. Ala234 carries the GPI-anchor amidated alanine lipid modification. Residues 235–257 (SVILFSSPPVILLISFLLFLIVG) constitute a propeptide, removed in mature form.

Belongs to the prion family. Monomer and homodimer. Has a tendency to aggregate into amyloid fibrils containing a cross-beta spine, formed by a steric zipper of superposed beta-strands. Soluble oligomers may represent an intermediate stage on the path to fibril formation. Copper binding may promote oligomerization. Interacts with GRB2, APP, ERI3/PRNPIP and SYN1. Mislocalized cytosolically exposed PrP interacts with MGRN1; this interaction alters MGRN1 subcellular location and causes lysosomal enlargement. Interacts with KIAA1191.

It is found in the cell membrane. It localises to the golgi apparatus. Functionally, its primary physiological function is unclear. Has cytoprotective activity against internal or environmental stresses. May play a role in neuronal development and synaptic plasticity. May be required for neuronal myelin sheath maintenance. May play a role in iron uptake and iron homeostasis. Soluble oligomers are toxic to cultured neuroblastoma cells and induce apoptosis (in vitro). Association with GPC1 (via its heparan sulfate chains) targets PRNP to lipid rafts. Also provides Cu(2+) or Zn(2+) for the ascorbate-mediated GPC1 deaminase degradation of its heparan sulfate side chains. The chain is Major prion protein (PRNP) from Sus scrofa (Pig).